A 314-amino-acid polypeptide reads, in one-letter code: Hydroxyacyl-coenzyme A dehydrogenase, mitochondrial (314 aa).

Residues 1–12 (MAFVTRQFLRSM) constitute a mitochondrion transit peptide. NAD(+)-binding positions include 34–39 (GGGLMG) and Asp-57. A CoA-binding site is contributed by Ser-73. Position 75 is an N6-acetyllysine (Lys-75). Lys-80 serves as a coordination point for CoA. N6-succinyllysine is present on Lys-80. N6-acetyllysine; alternate is present on residues Lys-81 and Lys-87. N6-succinyllysine; alternate occurs at positions 81 and 87. NAD(+) is bound at residue Glu-122. N6-acetyllysine is present on Lys-125. Lys-127 provides a ligand contact to NAD(+). The residue at position 127 (Lys-127) is an N6-(2-hydroxyisobutyryl)lysine. An N6-acetyllysine; alternate modification is found at Lys-136. Lys-136 is subject to N6-succinyllysine; alternate. NAD(+) contacts are provided by Ser-149 and Asn-173. A CoA-binding site is contributed by Ser-149. Residue Lys-179 is modified to N6-acetyllysine. Residues Lys-185, Lys-192, and Lys-202 each carry the N6-acetyllysine; alternate modification. N6-succinyllysine; alternate is present on residues Lys-185, Lys-192, and Lys-202. Lys-206 carries the post-translational modification N6-succinyllysine. An N6-acetyllysine; alternate mark is found at Lys-212 and Lys-241. N6-succinyllysine; alternate is present on residues Lys-212 and Lys-241. Lys-305 is an NAD(+) binding site. An N6-acetyllysine; alternate modification is found at Lys-312. Lys-312 bears the N6-succinyllysine; alternate mark.

This sequence belongs to the 3-hydroxyacyl-CoA dehydrogenase family. Homodimer. Interacts with GLUD1; this interaction inhibits the activation of glutamate dehydrogenase 1 (GLUD1). In terms of processing, succinylation at Lys-81, adjacent to a coenzyme A binding site. Desuccinylated by SIRT5. In terms of tissue distribution, expressed in liver, kidney, brain, and pancreatic islets.

The protein resides in the mitochondrion matrix. It localises to the nucleus. It is found in the cytoplasm. Its subcellular location is the cytosol. It catalyses the reaction a (3S)-3-hydroxyacyl-CoA + NAD(+) = a 3-oxoacyl-CoA + NADH + H(+). The catalysed reaction is (3S)-3-hydroxybutanoyl-CoA + NAD(+) = acetoacetyl-CoA + NADH + H(+). The enzyme catalyses (3S)-hydroxydecanoyl-CoA + NAD(+) = 3-oxodecanoyl-CoA + NADH + H(+). It carries out the reaction (3S)-hydroxyhexadecanoyl-CoA + NAD(+) = 3-oxohexadecanoyl-CoA + NADH + H(+). The protein operates within lipid metabolism; fatty acid beta-oxidation. Mitochondrial fatty acid beta-oxidation enzyme that catalyzes the third step of the beta-oxidation cycle for medium and short-chain 3-hydroxy fatty acyl-CoAs (C4 to C10). Plays a role in the control of insulin secretion by inhibiting the activation of glutamate dehydrogenase 1 (GLUD1), an enzyme that has an important role in regulating amino acid-induced insulin secretion. Plays a role in the maintenance of normal spermatogenesis through the reduction of fatty acid accumulation in the testes. Functionally, inhibits cell proliferation. The polypeptide is Hydroxyacyl-coenzyme A dehydrogenase, mitochondrial (Hadh) (Mus musculus (Mouse)).